The primary structure comprises 660 residues: Transcription activator of gluconeogenesis CHGG_09150 (660 aa).

Residues 1 to 12 (MSDSENEYDETD) are compositionally biased toward acidic residues. Residues 1–52 (MSDSENEYDETDQLVKEEDEKMSDQRLTSEGADTSAEPKKKYDPKDPLRPRR) form a disordered region. Composition is skewed to basic and acidic residues over residues 13 to 24 (QLVKEEDEKMSD) and 36 to 49 (AEPK…DPLR). Residues 59 to 87 (CFACQRAHLTCGDERPCQRCIKRNLMESC) constitute a DNA-binding region (zn(2)-C6 fungal-type). Disordered regions lie at residues 98-144 (LHDA…TFFS), 170-191 (FANQ…QISG), and 319-368 (PTSI…RQSN). Positions 129–144 (SIQTSEASSNQGTFFS) are enriched in polar residues. A compositionally biased stretch (low complexity) spans 173–184 (QQSPTSPSFQTS). Composition is skewed to polar residues over residues 320–332 (TSIQ…TNSP) and 344–368 (TMAT…RQSN). The PAS domain maps to 455-526 (SLLEYEEFMH…NSKARVGLAT (72 aa)). The tract at residues 587–613 (APDKDDGTGESSTDGQLPQKDPRNSIL) is disordered.

This sequence belongs to the ERT1/acuK family.

The protein resides in the nucleus. Functionally, transcription factor which regulates nonfermentable carbon utilization. Activator of gluconeogenetic genes. The protein is Transcription activator of gluconeogenesis CHGG_09150 of Chaetomium globosum (strain ATCC 6205 / CBS 148.51 / DSM 1962 / NBRC 6347 / NRRL 1970) (Soil fungus).